Here is a 624-residue protein sequence, read N- to C-terminus: Acidic juvenile hormone-suppressible protein 1 (624 aa).

Residues Met-1–Ala-18 form the signal peptide. N-linked (GlcNAc...) asparagine glycans are attached at residues Asn-75 and Asn-478.

It belongs to the hemocyanin family.

The protein localises to the secreted. It localises to the extracellular space. The polypeptide is Acidic juvenile hormone-suppressible protein 1 (AJSP-1) (Trichoplusia ni (Cabbage looper)).